Here is a 251-residue protein sequence, read N- to C-terminus: Core protein VP8 (251 aa).

Residues 1–32 (MSLLLENLIEEDTIFFAGSISEYDDLQMVIAG) constitute a propeptide, removed by core protease OPG083.

Belongs to the orthopoxvirus OPG098 family. Undergoes morphogenesis-associated proteolysis which cleaves the 28 kDa to a 25-kDa product. Proteolytic cleavage of major core proteins P4a (OPG136), P4b (OPG129), and VP8 (OPG098), which occurs at a late stage of core formation, is required for production of infectious mature virions (MV).

It localises to the virion. The protein resides in the host cytoplasm. In terms of biological role, major core structural protein. This Monkeypox virus protein is Core protein VP8 (OPG098).